The following is a 603-amino-acid chain: Glutathione-regulated potassium-efflux system protein KefB (603 aa).

The next 13 helical transmembrane spans lie at 5 to 25 (ALLT…PIAA), 29 to 49 (IGAV…GLGF), 55 to 75 (AILH…GLEL), 87 to 107 (IFGV…GALY), 115 to 135 (SALI…LQLM), 152 to 172 (VLLF…ILAG), 180 to 202 (WERI…YLVR), 207 to 227 (FIAA…LVLG), 230 to 250 (LFME…GILL), 268 to 288 (GLLL…GILY), 291 to 311 (IVKI…VLYF), 326 to 346 (FAGV…AAAS), and 356 to 376 (PLLL…MQLI). One can recognise an RCK N-terminal domain in the interval 400–521 (EPQVIVVGFG…VRHFSRETFS (122 aa)).

It belongs to the monovalent cation:proton antiporter 2 (CPA2) transporter (TC 2.A.37) family. KefB subfamily. Interacts with the regulatory subunit KefG.

The protein resides in the cell inner membrane. In terms of biological role, pore-forming subunit of a potassium efflux system that confers protection against electrophiles. Catalyzes K(+)/H(+) antiport. The protein is Glutathione-regulated potassium-efflux system protein KefB of Pectobacterium carotovorum subsp. carotovorum (strain PC1).